A 206-amino-acid chain; its full sequence is Thiamine-phosphate synthase (206 aa).

Residues 36–40 (QLRMK) and N68 contribute to the 4-amino-2-methyl-5-(diphosphooxymethyl)pyrimidine site. Positions 69 and 88 each coordinate Mg(2+). S106 is a binding site for 4-amino-2-methyl-5-(diphosphooxymethyl)pyrimidine. A 2-[(2R,5Z)-2-carboxy-4-methylthiazol-5(2H)-ylidene]ethyl phosphate-binding site is contributed by 132–134 (TNT). 4-amino-2-methyl-5-(diphosphooxymethyl)pyrimidine is bound at residue K135. Residues G162 and 182–183 (VS) contribute to the 2-[(2R,5Z)-2-carboxy-4-methylthiazol-5(2H)-ylidene]ethyl phosphate site.

This sequence belongs to the thiamine-phosphate synthase family. Requires Mg(2+) as cofactor.

It catalyses the reaction 2-[(2R,5Z)-2-carboxy-4-methylthiazol-5(2H)-ylidene]ethyl phosphate + 4-amino-2-methyl-5-(diphosphooxymethyl)pyrimidine + 2 H(+) = thiamine phosphate + CO2 + diphosphate. The catalysed reaction is 2-(2-carboxy-4-methylthiazol-5-yl)ethyl phosphate + 4-amino-2-methyl-5-(diphosphooxymethyl)pyrimidine + 2 H(+) = thiamine phosphate + CO2 + diphosphate. The enzyme catalyses 4-methyl-5-(2-phosphooxyethyl)-thiazole + 4-amino-2-methyl-5-(diphosphooxymethyl)pyrimidine + H(+) = thiamine phosphate + diphosphate. Its pathway is cofactor biosynthesis; thiamine diphosphate biosynthesis; thiamine phosphate from 4-amino-2-methyl-5-diphosphomethylpyrimidine and 4-methyl-5-(2-phosphoethyl)-thiazole: step 1/1. Its function is as follows. Condenses 4-methyl-5-(beta-hydroxyethyl)thiazole monophosphate (THZ-P) and 2-methyl-4-amino-5-hydroxymethyl pyrimidine pyrophosphate (HMP-PP) to form thiamine monophosphate (TMP). This Methanococcus vannielii (strain ATCC 35089 / DSM 1224 / JCM 13029 / OCM 148 / SB) protein is Thiamine-phosphate synthase.